A 101-amino-acid chain; its full sequence is Thyrotropin subunit beta (101 aa).

Intrachain disulfides connect cysteine 2–cysteine 88, cysteine 10–cysteine 66, cysteine 14–cysteine 68, and cysteine 71–cysteine 78. N-linked (GlcNAc...) asparagine glycosylation occurs at asparagine 6.

It belongs to the glycoprotein hormones subunit beta family. In terms of assembly, heterodimer of a common alpha chain and a unique beta chain which confers biological specificity to thyrotropin, lutropin, follitropin and gonadotropin.

It is found in the secreted. In terms of biological role, indispensable for the control of thyroid structure and metabolism. The sequence is that of Thyrotropin subunit beta (TSHB) from Phodopus sungorus (Striped hairy-footed hamster).